Here is a 572-residue protein sequence, read N- to C-terminus: 2-isopropylmalate synthase (572 aa).

A Pyruvate carboxyltransferase domain is found at 31–305 (PIWMSTDLRD…DPGLDFSNIN (275 aa)). Residues aspartate 40, histidine 244, histidine 246, and asparagine 280 each coordinate Mg(2+). Positions 437–572 (NATPVHYVGH…MNDATESVGV (136 aa)) are regulatory domain.

This sequence belongs to the alpha-IPM synthase/homocitrate synthase family. LeuA type 2 subfamily. In terms of assembly, homodimer. Mg(2+) serves as cofactor.

It localises to the cytoplasm. The enzyme catalyses 3-methyl-2-oxobutanoate + acetyl-CoA + H2O = (2S)-2-isopropylmalate + CoA + H(+). The protein operates within amino-acid biosynthesis; L-leucine biosynthesis; L-leucine from 3-methyl-2-oxobutanoate: step 1/4. Catalyzes the condensation of the acetyl group of acetyl-CoA with 3-methyl-2-oxobutanoate (2-ketoisovalerate) to form 3-carboxy-3-hydroxy-4-methylpentanoate (2-isopropylmalate). This Paraburkholderia xenovorans (strain LB400) protein is 2-isopropylmalate synthase.